Consider the following 70-residue polypeptide: Testis-expressed protein 53 (70 aa).

Expressed in Testis.

The polypeptide is Testis-expressed protein 53 (Homo sapiens (Human)).